The primary structure comprises 501 residues: Aspartate--tRNA ligase, cytoplasmic (501 aa).

T52 bears the Phosphothreonine mark. Residue K74 is modified to N6-acetyllysine. E229 contributes to the L-aspartate binding site. Position 249 is a phosphoserine (S249). The aspartate stretch occupies residues Q251 to K254. Position 273 (R273) interacts with L-aspartate. ATP contacts are provided by residues R273–E275 and R281–L283. The residue at position 374 (K374) is an N6-acetyllysine. Position 424 (E424) interacts with ATP. L-aspartate-binding residues include S427 and R431. Position 472–475 (G472–R475) interacts with ATP.

It belongs to the class-II aminoacyl-tRNA synthetase family. Type 2 subfamily. Homodimer. Part of a multisubunit complex that groups tRNA ligases for Arg (RARS1), Asp (DARS1), Gln (QARS1), Ile (IARS1), Leu (LARS1), Lys (KARS1), Met (MARS1) the bifunctional ligase for Glu and Pro (EPRS1) and the auxiliary subunits AIMP1/p43, AIMP2/p38 and EEF1E1/p18.

The protein resides in the cytoplasm. It catalyses the reaction tRNA(Asp) + L-aspartate + ATP = L-aspartyl-tRNA(Asp) + AMP + diphosphate. Catalyzes the specific attachment of an amino acid to its cognate tRNA in a 2 step reaction: the amino acid (AA) is first activated by ATP to form AA-AMP and then transferred to the acceptor end of the tRNA. In Rattus norvegicus (Rat), this protein is Aspartate--tRNA ligase, cytoplasmic (Dars1).